A 141-amino-acid polypeptide reads, in one-letter code: High mobility group B protein 3 (141 aa).

2 stretches are compositionally biased toward basic and acidic residues: residues 1–12 (MKGAKSKAETRS) and 70–110 (GGEK…LEEG). 2 disordered regions span residues 1–40 (MKGAKSKAETRSTKLSVTKKPAKGAKGAAKDPNKPKRPSS) and 54–141 (KEEH…EDDD). Residues 35-104 (PKRPSSAFFV…EYEKNMKAYN (70 aa)) constitute a DNA-binding region (HMG box). Ser-122 is subject to Phosphoserine. Positions 124-141 (VNDEDDAEDGSEEEEDDD) are enriched in acidic residues.

It belongs to the HMGB family. Expressed in lateral roots, root tips, stems, cotyledons, leaves and flowers (excluding ovary and pedicels).

The protein resides in the nucleus. Its subcellular location is the cytoplasm. It is found in the cytosol. Its function is as follows. Binds preferentially double-stranded DNA. This Arabidopsis thaliana (Mouse-ear cress) protein is High mobility group B protein 3 (HMGB3).